We begin with the raw amino-acid sequence, 146 residues long: Hemoglobin subunit beta (146 aa).

Residues 2–146 (FLTAEEKSLV…VANALAHKYH (145 aa)) form the Globin domain. The residue at position 44 (Ser44) is a Phosphoserine. The residue at position 59 (Lys59) is an N6-acetyllysine. His63 serves as a coordination point for heme b. Residue Lys82 is modified to N6-acetyllysine. His92 contributes to the heme b binding site. Cys93 is modified (S-nitrosocysteine). At Lys144 the chain carries N6-acetyllysine.

The protein belongs to the globin family. As to quaternary structure, heterotetramer of two alpha chains and two beta chains. Red blood cells.

In terms of biological role, involved in oxygen transport from the lung to the various peripheral tissues. The protein is Hemoglobin subunit beta (HBB) of Proteles cristata (Aardwolf).